Consider the following 274-residue polypeptide: Coiled-coil domain-containing protein 28A (274 aa).

Positions 121-166 (VSKSTGFSNPASQSTSQRPKLKRVMKEKTKPQGGEGKGAQSTPIQH) are disordered. The span at 122–138 (SKSTGFSNPASQSTSQR) shows a compositional bias: polar residues. Residues 234 to 263 (KRKTASDSNLDRLLSDLEELNSSIQKLHLA) are a coiled coil.

The polypeptide is Coiled-coil domain-containing protein 28A (CCDC28A) (Homo sapiens (Human)).